A 558-amino-acid chain; its full sequence is uncharacterized protein (558 aa).

Residues 396-420 form a disordered region; the sequence is SSITDNDTDNDSGATESQQTDSEND. Residues 407–416 show a composition bias toward polar residues; that stretch reads SGATESQQTD.

Belongs to the chlamydial CPn_0065/CT_288/TC_0561 family.

This is an uncharacterized protein from Chlamydia muridarum (strain MoPn / Nigg).